The following is a 252-amino-acid chain: Ribosomal RNA small subunit methyltransferase J (252 aa).

S-adenosyl-L-methionine is bound by residues 101-102 (RD), 117-118 (ER), 153-154 (SS), and Asp-171.

This sequence belongs to the methyltransferase superfamily. RsmJ family.

The protein localises to the cytoplasm. It catalyses the reaction guanosine(1516) in 16S rRNA + S-adenosyl-L-methionine = N(2)-methylguanosine(1516) in 16S rRNA + S-adenosyl-L-homocysteine + H(+). Functionally, specifically methylates the guanosine in position 1516 of 16S rRNA. In Salmonella choleraesuis (strain SC-B67), this protein is Ribosomal RNA small subunit methyltransferase J.